We begin with the raw amino-acid sequence, 213 residues long: StAR-related lipid transfer protein 5 (213 aa).

In terms of domain architecture, START spans Met1–His213.

In terms of tissue distribution, expressed in most tissues, with highest levels in liver and in kidney.

May be involved in the intracellular transport of sterols or other lipids. May bind cholesterol or other sterols. The polypeptide is StAR-related lipid transfer protein 5 (Stard5) (Mus musculus (Mouse)).